The primary structure comprises 37 residues: Potassium channel toxin alpha-KTx 4.3 (37 aa).

Disulfide bonds link cysteine 7-cysteine 28, cysteine 13-cysteine 33, and cysteine 17-cysteine 35. Residues 26-33 (GKCMNGKC) are interaction with Ca(2+)-activated K(+) channels.

As to expression, expressed by the venom gland.

Its subcellular location is the secreted. Its function is as follows. Blocks reversibly Shaker B potassium-channels. The protein is Potassium channel toxin alpha-KTx 4.3 of Tityus discrepans (Venezuelan scorpion).